A 316-amino-acid polypeptide reads, in one-letter code: Olfactory receptor 2G6 (316 aa).

The Extracellular portion of the chain corresponds to 1 to 25 (MEETNNSSEKGFLLLGFSDQPQLER). N-linked (GlcNAc...) asparagine glycosylation is found at asparagine 5 and asparagine 6. The helical transmembrane segment at 26 to 49 (FLFAIILYFYVLSLLGNTALILVC) threads the bilayer. Residues 50 to 57 (CLDSRLHT) lie on the Cytoplasmic side of the membrane. A helical transmembrane segment spans residues 58-79 (PMYFFLSNLSCVDICFTTSVAP). Residues 80-100 (QLLVTMNKKDKTMSYGGCVAQ) lie on the Extracellular side of the membrane. A disulfide bond links cysteine 97 and cysteine 189. A helical transmembrane segment spans residues 101-120 (LYVAMGLGSSECILLAVMAY). Topologically, residues 121-139 (DRYAAVCRPLRYIAIMHPR) are cytoplasmic. The helical transmembrane segment at 140 to 158 (FCASLAGGAWLSGLITSLI) threads the bilayer. Over 159-195 (QCSLTVQLPLCGHRTLDHIFCEVPVLIKLACVDTTFN) the chain is Extracellular. A helical membrane pass occupies residues 196-219 (EAELFVASVVFLIVPVLLILVSYG). Over 220–236 (FITQAVLRIKSAAGRQK) the chain is Cytoplasmic. Residues 237–259 (AFGTCSSHLVVVIIFYGTIIFMY) traverse the membrane as a helical segment. At 260-272 (LQPANRRSKNQGK) the chain is on the extracellular side. The chain crosses the membrane as a helical span at residues 273 to 292 (FVSLFYTIVTPLLNPIIYTL). At 293-316 (RNKDVKGALRTLILGSAAGQSHKD) the chain is on the cytoplasmic side.

The protein belongs to the G-protein coupled receptor 1 family.

It localises to the cell membrane. Functionally, odorant receptor. The protein is Olfactory receptor 2G6 (OR2G6) of Homo sapiens (Human).